Consider the following 116-residue polypeptide: Large ribosomal subunit protein uL18 (116 aa).

Belongs to the universal ribosomal protein uL18 family. As to quaternary structure, part of the 50S ribosomal subunit; part of the 5S rRNA/L5/L18/L25 subcomplex. Contacts the 5S and 23S rRNAs.

Its function is as follows. This is one of the proteins that bind and probably mediate the attachment of the 5S RNA into the large ribosomal subunit, where it forms part of the central protuberance. In Teredinibacter turnerae (strain ATCC 39867 / T7901), this protein is Large ribosomal subunit protein uL18.